The chain runs to 430 residues: Trigger factor (430 aa).

In terms of domain architecture, PPIase FKBP-type spans 163–248 (GNIAIIDFKG…IKDIKVKELP (86 aa)).

The protein belongs to the FKBP-type PPIase family. Tig subfamily.

The protein localises to the cytoplasm. It carries out the reaction [protein]-peptidylproline (omega=180) = [protein]-peptidylproline (omega=0). Involved in protein export. Acts as a chaperone by maintaining the newly synthesized protein in an open conformation. Functions as a peptidyl-prolyl cis-trans isomerase. This chain is Trigger factor, found in Clostridium botulinum (strain Okra / Type B1).